Consider the following 1707-residue polypeptide: Latrophilin Cirl (1707 aa).

The Extracellular segment spans residues 1-767 (MLPTILSISY…LFTMFDGNMR (767 aa)). The region spanning 25 to 114 (ACEGKKLTIE…KYLEAHYQCI (90 aa)) is the SUEL-type lectin domain. A glycan (N-linked (GlcNAc...) asparagine) is linked at N142. The segment at 176–301 (GLFNVPPQHT…TAASGAVVPG (126 aa)) is disordered. Polar residues-rich tracts occupy residues 185–198 (TAVTHSTPSSSTTA) and 256–265 (NATSPSNTRI). A glycan (N-linked (GlcNAc...) asparagine) is linked at N256. A compositionally biased stretch (low complexity) spans 275–285 (DDGTLLTTKSS). N-linked (GlcNAc...) asparagine glycosylation is found at N302, N341, N398, N655, N703, and N730. A disordered region spans residues 376–400 (YDEYDDDPSSTTPAPNGGDCLHNSS). One can recognise a GAIN-B domain in the interval 561–754 (RSVVQKVKNI…AILMDVVDEH (194 aa)). 2 disulfides stabilise this stretch: C709–C736 and C724–C738. Positions 709–754 (CVFWNYIDHAWSANGCSLESTNRTHSVCSCNHLTNFAILMDVVDEH) are GPS. Residues 768–788 (IFIYISIGICVVFIVIALLTL) traverse the membrane as a helical segment. The Cytoplasmic segment spans residues 789 to 801 (KLFNGVFVKSART). Residues 802 to 822 (SIYTSIYLCLLAIELLFLLGI) traverse the membrane as a helical segment. Residues 823–828 (EQTETS) lie on the Extracellular side of the membrane. The chain crosses the membrane as a helical span at residues 829 to 849 (IFCGFITIFLHCAILSGTAWF). At 850-875 (CYEAFHSYSTLTSDELLLEVDQTPKV) the chain is on the cytoplasmic side. The chain crosses the membrane as a helical span at residues 876 to 896 (NCYYLLSYGLSLSVVAISLVI). At 897-920 (DPSTYTQNDYCVLMEANALFYATF) the chain is on the extracellular side. A helical transmembrane segment spans residues 921-941 (VIPVLVFFVAAIGYTFLSWII). The Cytoplasmic segment spans residues 942 to 968 (LCRKSRTGLKTKEHTRLASVRFDIRCS). A helical membrane pass occupies residues 969 to 989 (FVFLLLLSAVWCSSYFYLRGA). At 990–999 (KMDDDTADVY) the chain is on the extracellular side. The chain crosses the membrane as a helical span at residues 1000-1020 (GYCFICFNTLLGLYIFVFHCI). Topologically, residues 1021–1707 (QNEKIRREYR…VRCYLEPLAK (687 aa)) are cytoplasmic. Residue S1156 is modified to Phosphoserine. 2 disordered regions span residues 1169–1188 (AHKQQQQQQQQQQGPLGEGY) and 1236–1260 (KPNSGQHGKKKRGAGGVPASPSGSL). Positions 1172–1181 (QQQQQQQQQQ) are enriched in low complexity. Phosphoserine occurs at positions 1255 and 1262. Over residues 1316-1326 (QQLHQQQQQQL) the composition is skewed to low complexity. Disordered regions lie at residues 1316-1335 (QQLHQQQQQQLSSDEEQVEQ), 1450-1538 (GGGS…SDER), 1563-1582 (APLDYGALPPGSGPQPEHNG), and 1612-1687 (GGRL…QQRH). Phosphoserine is present on residues S1327 and S1328. A compositionally biased stretch (low complexity) spans 1456–1481 (GGSVSSRSQQQQLKKQQQQQSLAQQR). Composition is skewed to acidic residues over residues 1489–1503 (DDDDDEEEEEDEEAT) and 1513–1526 (CDEDEEEDESDLED). Polar residues predominate over residues 1635–1650 (QTPAQKRQQLQKLSPQ). Positions 1651 to 1673 (STTSSSSHTSHSNPNPHPLQLTH) are enriched in low complexity. Residues 1674–1686 (PHPHQHPPHHQQR) show a composition bias toward basic residues.

It belongs to the G-protein coupled receptor 2 family. LN-TM7 subfamily. In terms of assembly, forms a heterodimer, consisting of a large extracellular region non-covalently linked to a seven-transmembrane moiety. In terms of processing, proteolytically cleaved into 2 subunits, an extracellular subunit and a seven-transmembrane subunit.

The protein resides in the cell membrane. This is Latrophilin Cirl from Drosophila yakuba (Fruit fly).